The sequence spans 503 residues: Ferulic acid decarboxylase 1 (503 aa).

Mn(2+)-binding residues include Asn170, His193, and Glu236. Residues 170-175 (NWSIAR), 192-193 (QH), and Glu236 each bind prenylated FMN. Glu285 (proton donor) is an active-site residue. Lys394 contacts prenylated FMN.

It belongs to the UbiD family. UbiD-like/FDC subfamily. Homodimer. May form higher order oligomers. Mn(2+) serves as cofactor. Requires prenylated FMN as cofactor.

It is found in the cytoplasm. The catalysed reaction is (E)-4-coumarate + H(+) = 4-vinylphenol + CO2. It carries out the reaction (E)-cinnamate + H(+) = styrene + CO2. It catalyses the reaction (E)-ferulate + H(+) = 2-methoxy-4-vinylphenol + CO2. Its function is as follows. Catalyzes the reversible decarboxylation of aromatic carboxylic acids like ferulic acid, p-coumaric acid or cinnamic acid, producing the corresponding vinyl derivatives 4-vinylphenol, 4-vinylguaiacol, and styrene, respectively, which play the role of aroma metabolites. Not essential for ubiquinone synthesis. The polypeptide is Ferulic acid decarboxylase 1 (Saccharomyces cerevisiae (strain ATCC 204508 / S288c) (Baker's yeast)).